A 207-amino-acid polypeptide reads, in one-letter code: Infectivity protein P11 (207 aa).

The helical transmembrane segment at 13-28 (WWIVAAIGGLAAFLLL) threads the bilayer. A coiled-coil region spans residues 64–95 (AALQANTQLSAQNAQLQAQMDASRLQLETQLN).

Its subcellular location is the virion membrane. Functionally, component of the phage ejection machinery. Pilot protein for the formation of the tube that conducts the genome into the target cell. Probably involved in penetration of the bacterial outer membrane and for making the peptidoglycan layer accessible to the viral transglycosylase. Essential for viral infectivity. The polypeptide is Infectivity protein P11 (XI) (Enterobacteria phage PRD1 (Bacteriophage PRD1)).